We begin with the raw amino-acid sequence, 337 residues long: 4-hydroxyproline 2-epimerase (337 aa).

Residue Cys-91 is the Proton acceptor of the active site. Substrate-binding positions include 92–93 (GH), Asp-252, and 257–258 (GT).

Belongs to the proline racemase family.

It carries out the reaction trans-4-hydroxy-L-proline = cis-4-hydroxy-D-proline. Its function is as follows. Catalyzes the epimerization of trans-4-hydroxy-L-proline (t4LHyp) to cis-4-hydroxy-D-proline (c4DHyp). Is likely involved in a degradation pathway that converts t4LHyp to alpha-ketoglutarate. Displays no proline racemase activity. The polypeptide is 4-hydroxyproline 2-epimerase (Cereibacter sphaeroides (strain ATCC 17029 / ATH 2.4.9) (Rhodobacter sphaeroides)).